The chain runs to 156 residues: Cytochrome c-type biogenesis protein CcmE 1 (156 aa).

At 1 to 8 the chain is on the cytoplasmic side; that stretch reads MNATRRQR. A helical; Signal-anchor for type II membrane protein transmembrane segment spans residues 9 to 29; the sequence is LWWVICVLTAAALAVTLIVFA. The Periplasmic segment spans residues 30 to 156; sequence LQRNMSYLFT…ATATPLTAPR (127 aa). Heme contacts are provided by H123 and Y127. The segment at 137–156 is disordered; the sequence is AEGHAGKPIPATATPLTAPR. The span at 146-156 shows a compositional bias: low complexity; that stretch reads PATATPLTAPR.

It belongs to the CcmE/CycJ family.

Its subcellular location is the cell inner membrane. Heme chaperone required for the biogenesis of c-type cytochromes. Transiently binds heme delivered by CcmC and transfers the heme to apo-cytochromes in a process facilitated by CcmF and CcmH. This chain is Cytochrome c-type biogenesis protein CcmE 1, found in Xanthomonas euvesicatoria pv. vesicatoria (strain 85-10) (Xanthomonas campestris pv. vesicatoria).